Reading from the N-terminus, the 1279-residue chain is Maestro heat-like repeat-containing protein family member 7 (1279 aa).

Residues 1–145 form a disordered region; sequence MALSRGTSLI…NSSRPCSEDV (145 aa). A compositionally biased stretch (low complexity) spans 39 to 61; that stretch reads PDLALAPPPEHALALTPALHPAL. Composition is skewed to polar residues over residues 71–106 and 124–140; these read PVSN…NHTS and PSST…SSRP. Residues asparagine 200, asparagine 210, asparagine 255, asparagine 267, and asparagine 296 are each glycosylated (N-linked (GlcNAc...) asparagine). Serine 356 is subject to Phosphoserine. Residue asparagine 541 is glycosylated (N-linked (GlcNAc...) asparagine). Helical transmembrane passes span 548 to 568 and 722 to 742; these read TLVT…LLLG and LLPI…ALLM. HEAT repeat units follow at residues 913–950, 992–1029, 1035–1072, and 1080–1117; these read QELC…MEQV, AKVQ…GQGK, AVYV…KLQT, and EQLT…FMNW.

The protein resides in the membrane. The sequence is that of Maestro heat-like repeat-containing protein family member 7 (Mroh7) from Mus musculus (Mouse).